The primary structure comprises 123 residues: DNA-directed RNA polymerase I subunit RPA12 (123 aa).

Zn(2+) is bound by residues cysteine 17, cysteine 20, cysteine 35, cysteine 38, cysteine 84, and cysteine 87. The segment at 17–38 adopts a C4-type zinc-finger fold; that stretch reads CPDCGSVLPLPGIQDTVICSRC. The TFIIS-type zinc-finger motif lies at 80 to 120; the sequence is IDRRCPRCGHEGMAYHTRQMRSADEGQTVFYTCINCKFQEK. The Hairpin signature appears at 103 to 104; it reads DE. The Zn(2+) site is built by cysteine 112 and cysteine 115.

The protein belongs to the archaeal RpoM/eukaryotic RPA12/RPB9/RPC11 RNA polymerase family. In terms of assembly, component of the RNA polymerase I (Pol I) complex consisting of 13 subunits: a ten-subunit catalytic core composed of POLR1A/RPA1, POLR1B/RPA2, POLR1C/RPAC1, POLR1D/RPAC2, POLR1H/RPA12, POLR2E/RPABC1, POLR2F/RPABC2, POLR2H/RPABC3, POLR2K/RPABC4 and POLR2L/RPABC5; a mobile stalk subunit POLR1F/RPA43 protruding from the core and additional subunits homologous to general transcription factors POLR1E/RPA49 and POLR1G/RPA34. Part of Pol I pre-initiation complex (PIC), in which Pol I core assembles with RRN3 and promoter-bound UTBF and SL1/TIF-IB complex.

Its subcellular location is the nucleus. It localises to the nucleolus. Functionally, core component of RNA polymerase I (Pol I), a DNA-dependent RNA polymerase which synthesizes ribosomal RNA precursors using the four ribonucleoside triphosphates as substrates. Can mediate Pol I proofreading of the nascent RNA transcript. Anchors into the Pol I active site to monitor transcription fidelity and cleave mis-incorporated 5'-ribonucleotides. The protein is DNA-directed RNA polymerase I subunit RPA12 of Mus musculus (Mouse).